Reading from the N-terminus, the 679-residue chain is MISASRAAVSRFVGTAASRGPTAARHQDGWNGLSHEAFRIVSRRDYASEAIKGAVVGIDLGTTNSCVAVMEGKQAKVLENAEGARTTPSVVAFTADGERLVGMPAKRQAVTNPNNTFYATKRLIGRRYDDPEVQKDIKNVPFKIVRASNGDAWVEAHGKLYSPSQIGAFVLMKMKETAENYLGHTAKNAVITVPAYFNDSQRQATKDAGQISGLNVLRVINEPTAAALAYGLDKSEDKIIAVYDLGGGTFDISILEIQKGVFEVKSTNGDTFLGGEDFDQALLRHIVKEFKRETGVDLTKDNMALQRVREAAEKAKCELSSSVQTDINLPYLTMDASGPKHLNMKLTRAQFEGIVTDLIRRTIAPCQKAMQDAEVSKSDIGEVILVGGMTRMPKVQQTVQDLFGRAPSKAVNPDEAVAIGAAIQGGVLAGDVTDVLLLDVTPLSLGIETLGGVFTKLINRNTTIPTKKSQVFSTAADGQTQVEIKVCQGEREMAGDNKLLGQFTLIGIPPAPRGVPQIEVTFDIDANGIVHVSAKDKGTGREQQIVIQSSGGLSKDDIENMVKNAEKYAEEDRRKKERVEAVNMAEGIIHDTETKMEEFKDQLPADECNKLKEEISKMRELLARKDSETGENIRQAASSLQQASLKLFEMAYKKMASEREGSGSSGTGEQKDNQKEEKQ.

The transit peptide at 1–46 (MISASRAAVSRFVGTAASRGPTAARHQDGWNGLSHEAFRIVSRRDY) directs the protein to the mitochondrion. The interval 1–432 (MISASRAAVS…IQGGVLAGDV (432 aa)) is interaction with NFS1. Positions 63 and 64 each coordinate ADP. A nucleotide-binding domain (NBD) region spans residues 63–431 (TNSCVAVMEG…AIQGGVLAGD (369 aa)). Residue K76 is modified to N6-acetyllysine. T87 is subject to Phosphothreonine. Residues K135 and K138 each carry the N6-acetyllysine; alternate modification. K135 and K138 each carry N6-succinyllysine; alternate. An N6-acetyllysine modification is found at K143. K206 bears the N6-acetyllysine; alternate mark. Position 206 is an N6-succinyllysine; alternate (K206). K206 is subject to N6-malonyllysine; alternate. K234 and K288 each carry N6-acetyllysine. K300 carries the N6-acetyllysine; alternate modification. The residue at position 300 (K300) is an N6-succinyllysine; alternate. Positions 313, 316, and 320 each coordinate ADP. K368 carries the N6-succinyllysine modification. ADP is bound by residues G388 and R391. Position 394 is an N6-succinyllysine (K394). Phosphoserine is present on S408. The interdomain linker stretch occupies residues 432 to 441 (VTDVLLLDVT). Residues 432-679 (VTDVLLLDVT…QKDNQKEEKQ (248 aa)) form an interaction with FXN and ISCU region. A substrate-binding domain (SBD) region spans residues 442-679 (PLSLGIETLG…QKDNQKEEKQ (238 aa)). R513 is subject to Omega-N-methylarginine. 2 positions are modified to N6-acetyllysine; alternate: K567 and K600. 2 positions are modified to N6-succinyllysine; alternate: K567 and K600. Position 610 is an N6-succinyllysine (K610). The residue at position 612 (K612) is an N6-acetyllysine. K646 carries the post-translational modification N6-acetyllysine; alternate. N6-succinyllysine; alternate is present on K646. The tract at residues 656 to 679 (ASEREGSGSSGTGEQKDNQKEEKQ) is disordered. Over residues 669 to 679 (EQKDNQKEEKQ) the composition is skewed to basic and acidic residues.

This sequence belongs to the heat shock protein 70 family. In terms of assembly, interacts strongly with the intermediate form of FXN and weakly with its mature form. Interacts with HSCB. Associates with the mitochondrial contact site and cristae organizing system (MICOS) complex, composed of at least MICOS10/MIC10, CHCHD3/MIC19, CHCHD6/MIC25, APOOL/MIC27, IMMT/MIC60, APOO/MIC23/MIC26 and QIL1/MIC13. This complex was also known under the names MINOS or MitOS complex. The MICOS complex associates with mitochondrial outer membrane proteins SAMM50, MTX1, MTX2 and DNAJC11, mitochondrial inner membrane protein TMEM11 and with HSPA9. Interacts with DNLZ, the interaction is required to prevent self-aggregation. Interacts with TESPA1. Interacts with PDPN. Interacts with NFU1, NFS1 and ISCU. Interacts with TP53; the interaction promotes TP53 degradation. Interacts (via SBD domain) with UBXN2A; the interaction with UBXN2A inhibits HSPA9/MOT-2 interaction with and degradation of TP53, thereby promotes TP53 translocation to the nucleus. Interacts with ITPR1 AND VDAC1; this interaction couples ITPR1 to VDAC1. Component of the TIM23 mitochondrial inner membrane pre-sequence translocase complex.

Its subcellular location is the mitochondrion. The protein localises to the nucleus. It is found in the nucleolus. It localises to the cytoplasm. The protein resides in the mitochondrion matrix. It catalyses the reaction ATP + H2O = ADP + phosphate + H(+). The chaperone activity is regulated by ATP-induced allosteric coupling of the nucleotide-binding (NBD) and substrate-binding (SBD) domains. ATP binding in the NBD leads to a conformational change in the NBD, which is transferred through the interdomain linker (IDL) to the substrate-binding domain (SBD). This elicits a reduced substrate affinity and a faster substrate exchange rate. Upon hydrolysis of ATP to ADP, the protein undergoes a conformational change that increases its affinity for substrate proteins. It cycles through repeated phases of ATP hydrolysis and nucleotide exchange, facilitating repeated cycles of substrate binding and release. Functions in collaboration with co-chaperones. Functions with the co-chaperone, DNLZ, to maintain solubility and regulate ATP hydrolysis. Nucleotide exchange factors, GRPEL1 and GRPEL2, accelerate nucleotide exchange. Mitochondrial chaperone that plays a key role in mitochondrial protein import, folding, and assembly. Plays an essential role in the protein quality control system, the correct folding of proteins, the re-folding of misfolded proteins, and the targeting of proteins for subsequent degradation. These processes are achieved through cycles of ATP binding, ATP hydrolysis, and ADP release, mediated by co-chaperones. In mitochondria, it associates with the TIM (translocase of the inner membrane) protein complex to assist in the import and folding of mitochondrial proteins. Plays an important role in mitochondrial iron-sulfur cluster (ISC) biogenesis, interacts with and stabilizes ISC cluster assembly proteins FXN, NFU1, NFS1 and ISCU. Regulates erythropoiesis via stabilization of ISC assembly. Regulates mitochondrial calcium-dependent apoptosis by coupling two calcium channels, ITPR1 and VDAC1, at the mitochondria-associated endoplasmic reticulum (ER) membrane to facilitate calcium transport from the ER lumen to the mitochondria intermembrane space, providing calcium for the downstream calcium channel MCU, which releases it into the mitochondrial matrix. Although primarily located in the mitochondria, it is also found in other cellular compartments. In the cytosol, it associates with proteins involved in signaling, apoptosis, or senescence. It may play a role in cell cycle regulation via its interaction with and promotion of degradation of TP53. May play a role in the control of cell proliferation and cellular aging. Protects against reactive oxygen species (ROS). Extracellular HSPA9 plays a cytoprotective role by preventing cell lysis following immune attack by the membrane attack complex by disrupting formation of the complex. The sequence is that of Stress-70 protein, mitochondrial from Bos taurus (Bovine).